The following is a 30-amino-acid chain: Dendrotoxin B (30 aa).

A disulfide bond links C3 and C22.

This sequence belongs to the three-finger toxin family. Short-chain subfamily. Orphan group XI sub-subfamily. In terms of processing, contains 4 disulfide bonds. As to expression, expressed by the venom gland.

The protein resides in the secreted. In terms of biological role, blocks voltage-gated potassium channels (Kv). This is the slowly inactivating phase of potassium efflux which is blocked by this toxin. This Dendroaspis angusticeps (Eastern green mamba) protein is Dendrotoxin B.